Here is a 453-residue protein sequence, read N- to C-terminus: Ribosomal protein uS12 methylthiotransferase RimO (453 aa).

Residues 5 to 120 (PKVGFVSLGC…VMQAVHSHLP (116 aa)) form the MTTase N-terminal domain. The [4Fe-4S] cluster site is built by Cys14, Cys50, Cys79, Cys151, Cys155, and Cys158. Residues 137–383 (LTPRHYAYLK…EVAEEVSAHR (247 aa)) form the Radical SAM core domain. The TRAM domain occupies 385 to 453 (QRKVGKTLKV…ADGHDLWGEV (69 aa)).

It belongs to the methylthiotransferase family. RimO subfamily. It depends on [4Fe-4S] cluster as a cofactor.

Its subcellular location is the cytoplasm. The enzyme catalyses L-aspartate(89)-[ribosomal protein uS12]-hydrogen + (sulfur carrier)-SH + AH2 + 2 S-adenosyl-L-methionine = 3-methylsulfanyl-L-aspartate(89)-[ribosomal protein uS12]-hydrogen + (sulfur carrier)-H + 5'-deoxyadenosine + L-methionine + A + S-adenosyl-L-homocysteine + 2 H(+). Its function is as follows. Catalyzes the methylthiolation of an aspartic acid residue of ribosomal protein uS12. This Burkholderia cenocepacia (strain ATCC BAA-245 / DSM 16553 / LMG 16656 / NCTC 13227 / J2315 / CF5610) (Burkholderia cepacia (strain J2315)) protein is Ribosomal protein uS12 methylthiotransferase RimO.